The chain runs to 418 residues: MTLLALGINHKTAPVSLRERVSFSPDKLDQALDSLLAQPMVQGGVVLSTCNRTELYLSVEEQDNLQEALIRWLCDYHNLNEEDLRKSLYWHQDNDAVSHLMRVASGLDSLVLGEPQILGQVKKAFADSQKGHMKASELERMFQKSFSVAKRVRTETDIGASAVSVAFAACTLARQIFESLSTVTVLLVGAGETIELVARHLREHKVQKMIIANRTRERAQILADEVGAEVIALSEIDERLREADIIISSTASPLPIIGKGMVERALKSRRNQPMLLVDIAVPRDVEPEVGKLANAYLYSVDDLQSIISHNLAQRKAAAVEAETIVAQETSEFMAWLRAQSASETIREYRSQAEHVRDELTAKALAALEQGGDAQAIMQDLAWKLTNRLIHAPTKSLQQAARDGDNERLNILRDSLGLE.

Residues 49–52 (TCNR), Ser109, 114–116 (EPQ), and Gln120 each bind substrate. Cys50 serves as the catalytic Nucleophile. 189–194 (GAGETI) provides a ligand contact to NADP(+).

Belongs to the glutamyl-tRNA reductase family. As to quaternary structure, homodimer.

The enzyme catalyses (S)-4-amino-5-oxopentanoate + tRNA(Glu) + NADP(+) = L-glutamyl-tRNA(Glu) + NADPH + H(+). It participates in porphyrin-containing compound metabolism; protoporphyrin-IX biosynthesis; 5-aminolevulinate from L-glutamyl-tRNA(Glu): step 1/2. Its function is as follows. Catalyzes the NADPH-dependent reduction of glutamyl-tRNA(Glu) to glutamate 1-semialdehyde (GSA). The chain is Glutamyl-tRNA reductase from Escherichia coli O139:H28 (strain E24377A / ETEC).